A 1051-amino-acid polypeptide reads, in one-letter code: Outer capsid protein VP2 (1051 aa).

This sequence belongs to the orbivirus VP2 family.

It localises to the virion. In terms of biological role, the VP2 protein is one of the two proteins (with VP5) which constitute the virus particle outer capsid. It is the major target of the host immunogenic response. The sequence is that of Outer capsid protein VP2 (Segment-2) from African horse sickness virus (AHSV).